A 506-amino-acid polypeptide reads, in one-letter code: Protein MGF 505-9R (506 aa).

The protein belongs to the asfivirus MGF 505 family.

In terms of biological role, plays a role in virus cell tropism, and may be required for efficient virus replication in macrophages. The sequence is that of Protein MGF 505-9R from African swine fever virus (isolate Tick/South Africa/Pretoriuskop Pr4/1996) (ASFV).